The chain runs to 505 residues: MGEIKGYISQVIGPVVDIHFDYGTEETVTLPRIHDAMEISRPNGKILIVEVQQHIGENTVRTVAMDTTDGLRRGMEAVSYGMPITMPTGDQVKGRLMNVTGDPIDGMAQLTKDGALPIHREPPKFEDLTTTQEVLYTGIKVIDLLEPYAKGGKIGLFGGAGVGKTVLIMELINNIAKKNNGFSVFAGVGERTREGNDLLREMIQSGVIRYGEEFKKSMEAGNWDLSKIDYDELAKSQATLVFGQMNEPPGARSSVALSGLTIAESFRDKASEGERKDILFFIDNIFRFTQAGSEVSALLGRMPSAVGYQPTLATEMGAMQERITSTKKGSITSVQAVYVPADDLTDPAPATTFTHLDATTVLSRKITELGIYPAVDPLESTSRILDPLIVGKEHYDTAQRVKQILQRNKELQDIISILGMEELSDEDRLTVNRARRVQRFLSQPFSVAEQFTGVPGVMVSIEDTIRGFKMIMDGETDDIPEQAFLNVGTIEDVLEKAKQLKEQAN.

158–165 is an ATP binding site; sequence GGAGVGKT.

This sequence belongs to the ATPase alpha/beta chains family. In terms of assembly, F-type ATPases have 2 components, CF(1) - the catalytic core - and CF(0) - the membrane proton channel. CF(1) has five subunits: alpha(3), beta(3), gamma(1), delta(1), epsilon(1). CF(0) has three main subunits: a(1), b(2) and c(9-12). The alpha and beta chains form an alternating ring which encloses part of the gamma chain. CF(1) is attached to CF(0) by a central stalk formed by the gamma and epsilon chains, while a peripheral stalk is formed by the delta and b chains.

The protein resides in the cell inner membrane. It catalyses the reaction ATP + H2O + 4 H(+)(in) = ADP + phosphate + 5 H(+)(out). Functionally, produces ATP from ADP in the presence of a proton gradient across the membrane. The catalytic sites are hosted primarily by the beta subunits. The protein is ATP synthase subunit beta of Parabacteroides distasonis (strain ATCC 8503 / DSM 20701 / CIP 104284 / JCM 5825 / NCTC 11152).